The chain runs to 383 residues: MNELEFVTLHRRHLHQYPELSLHEFETTSYITSFLEDLGVPYDRPLKTGVIAYLEGNSHHTIAFRADIDALPIYEENDIDFKSKNDNVMHACGHDGHTTALMLFVKRCKALYDKSELPHNVVFIFQPAEETGGGANRLIKAGAFDKYPIEAVFGFHVNPFEKEGKIVIRDEEITASATEYRFFLKGLSSHVADKEQGHSCGEGLQHVLSQIGQIQQFHLNGLKRNIIHMGHFEAGEAINTVPSHGYLEGTIRTYDTEDLAIVKHQMHKIAKSVQLLFNVECEVKFEEGYPPTMNHPQLRQAVENAIKGANLEIVEKKLPFLFGEDFSFYGQQLAPSYFVFVGTQNNEKGFVTGLHTAHLNFDEKILIDVVNYYEHLLRNYKEV.

Belongs to the peptidase M20 family.

This is an uncharacterized protein from Staphylococcus epidermidis (strain ATCC 12228 / FDA PCI 1200).